We begin with the raw amino-acid sequence, 940 residues long: Isoleucine--tRNA ligase (940 aa).

Residues 59–69 (PYANGDIHIGH) carry the 'HIGH' region motif. E563 serves as a coordination point for L-isoleucyl-5'-AMP. The short motif at 604–608 (KMSKS) is the 'KMSKS' region element. K607 contacts ATP. The Zn(2+) site is built by C903, C906, C923, and C926.

It belongs to the class-I aminoacyl-tRNA synthetase family. IleS type 1 subfamily. In terms of assembly, monomer. The cofactor is Zn(2+).

It localises to the cytoplasm. It carries out the reaction tRNA(Ile) + L-isoleucine + ATP = L-isoleucyl-tRNA(Ile) + AMP + diphosphate. Functionally, catalyzes the attachment of isoleucine to tRNA(Ile). As IleRS can inadvertently accommodate and process structurally similar amino acids such as valine, to avoid such errors it has two additional distinct tRNA(Ile)-dependent editing activities. One activity is designated as 'pretransfer' editing and involves the hydrolysis of activated Val-AMP. The other activity is designated 'posttransfer' editing and involves deacylation of mischarged Val-tRNA(Ile). This is Isoleucine--tRNA ligase from Wigglesworthia glossinidia brevipalpis.